Reading from the N-terminus, the 520-residue chain is Peptide chain release factor 3 (520 aa).

The tr-type G domain maps to 8 to 273 (ESRKTFAIIS…AYVDHAPMPN (266 aa)). GTP-binding positions include 17-24 (SHPDAGKT), 85-89 (DTPGH), and 139-142 (NKLD).

This sequence belongs to the TRAFAC class translation factor GTPase superfamily. Classic translation factor GTPase family. PrfC subfamily.

The protein resides in the cytoplasm. In terms of biological role, increases the formation of ribosomal termination complexes and stimulates activities of RF-1 and RF-2. It binds guanine nucleotides and has strong preference for UGA stop codons. It may interact directly with the ribosome. The stimulation of RF-1 and RF-2 is significantly reduced by GTP and GDP, but not by GMP. This chain is Peptide chain release factor 3, found in Staphylococcus carnosus (strain TM300).